The following is a 171-amino-acid chain: Large ribosomal subunit protein bL9 (171 aa).

The protein belongs to the bacterial ribosomal protein bL9 family.

Its function is as follows. Binds to the 23S rRNA. This chain is Large ribosomal subunit protein bL9, found in Rickettsia africae (strain ESF-5).